Reading from the N-terminus, the 420-residue chain is Putative FBD-associated F-box protein At1g78730 (420 aa).

Residues 21–71 form the F-box domain; it reads LDWLRKLPDSLLCQVFLNLPTKDVVKTSVLSSTWGNIWRSVPGLDLGYGDF. The region spanning 341-390 is the FBD domain; the sequence is ISILPGPQCNLPALEFVDILKPMVEKETELKLMSYFLEKSTILKKLTLRL.

This is Putative FBD-associated F-box protein At1g78730 from Arabidopsis thaliana (Mouse-ear cress).